A 401-amino-acid polypeptide reads, in one-letter code: 1-deoxy-D-xylulose 5-phosphate reductoisomerase (401 aa).

NADPH-binding residues include T10, G11, S12, I13, G36, N38, and N124. Residue K125 participates in 1-deoxy-D-xylulose 5-phosphate binding. E126 contacts NADPH. D150 contributes to the Mn(2+) binding site. S151, E152, S186, and H209 together coordinate 1-deoxy-D-xylulose 5-phosphate. Residue E152 coordinates Mn(2+). G215 provides a ligand contact to NADPH. The 1-deoxy-D-xylulose 5-phosphate site is built by S222, N227, K228, and E231. E231 serves as a coordination point for Mn(2+).

The protein belongs to the DXR family. It depends on Mg(2+) as a cofactor. Mn(2+) is required as a cofactor.

The enzyme catalyses 2-C-methyl-D-erythritol 4-phosphate + NADP(+) = 1-deoxy-D-xylulose 5-phosphate + NADPH + H(+). Its pathway is isoprenoid biosynthesis; isopentenyl diphosphate biosynthesis via DXP pathway; isopentenyl diphosphate from 1-deoxy-D-xylulose 5-phosphate: step 1/6. Catalyzes the NADPH-dependent rearrangement and reduction of 1-deoxy-D-xylulose-5-phosphate (DXP) to 2-C-methyl-D-erythritol 4-phosphate (MEP). The chain is 1-deoxy-D-xylulose 5-phosphate reductoisomerase from Vibrio parahaemolyticus serotype O3:K6 (strain RIMD 2210633).